The primary structure comprises 415 residues: Levansucrase LscA (415 aa).

5 residues coordinate sucrose: Trp45, Asp46, Ala132, Arg202, and Asp203. Asp46 (nucleophile) is an active-site residue. Glu287 (proton donor/acceptor) is an active-site residue.

It belongs to the glycosyl hydrolase 68 family.

The protein localises to the periplasm. The enzyme catalyses [6)-beta-D-fructofuranosyl-(2-&gt;](n) alpha-D-glucopyranoside + sucrose = [6)-beta-D-fructofuranosyl-(2-&gt;](n+1) alpha-D-glucopyranoside + D-glucose. In terms of biological role, catalyzes the synthesis of levan, a fructose polymer, by transferring the fructosyl moiety from sucrose to a growing acceptor molecule. LscA encodes a functional enzyme in vitro, when expressed in E.coli under control of the vector-based lactose promoter (Plac), and it can restore levan production to the lscB-lscC double mutant. However, lscA is not expressed in P.savastanoi pv. glycinea PG4180 under standard conditions. It could be an ancestral Lsc variant in P.syringae. In Pseudomonas savastanoi pv. glycinea (Pseudomonas syringae pv. glycinea), this protein is Levansucrase LscA.